We begin with the raw amino-acid sequence, 1493 residues long: Protein Shroom4 (1493 aa).

Residues 10 to 92 enclose the PDZ domain; it reads YVPVQLQGGA…ILKLIVRRRN (83 aa). Residues 202–282 form a disordered region; sequence CALSLRPEEP…PPQPPVRRDS (81 aa). Polar residues-rich tracts occupy residues 234 to 243 and 249 to 262; these read AETSGGSRRT and TPSS…QEGY. Ser411 carries the post-translational modification Phosphoserine. Residues 430 to 695 form a disordered region; it reads GSKGMELPPV…SPGQRPGQSS (266 aa). Composition is skewed to basic and acidic residues over residues 470–484 and 498–509; these read QSSK…DDRS and GEADGHPSEKGF. The span at 513-547 shows a compositional bias: polar residues; the sequence is NRTSRAASELANQQPSASGSLVQQATDCSSTTKAA. Ser729 bears the Phosphoserine mark. Disordered stretches follow at residues 740–759 and 781–813; these read AAME…ASTA and SKSL…NFQP. A compositionally biased stretch (polar residues) spans 782–802; sequence KSLSTSHLPGLTTHSNKTFTQ. Ser1019 carries the post-translational modification Phosphoserine. Disordered stretches follow at residues 1117-1170, 1187-1206, 1214-1236, and 1246-1265; these read AAQQ…ETSG, SFGH…AEQE, DFLP…PCYY, and GQEA…PPSG. Positions 1118–1129 are enriched in low complexity; it reads AQQQKQQQQQQK. Residues 1132–1159 show a composition bias toward acidic residues; that stretch reads EEEEEEEEEEEEEEEEEEEEAEEEEEEL. The ASD2 domain maps to 1213–1492; that stretch reads SDFLPPIRGH…RESLLLGPSN (280 aa). Residues 1382–1488 adopt a coiled-coil conformation; it reads LSGRLARVEN…LKCLRESLLL (107 aa).

The protein belongs to the shroom family. In terms of assembly, interacts directly with F-actin. In terms of tissue distribution, expressed in all fetal and adult tissues investigated. Expressed in adult heart, brain, placenta, lung, liver, skeletal muscle, kidney and pancreas. In brain regions detected in cerebellum, cerebral cortex, medulla, spinal cord, occipital pole, frontal lobe, temporal lobe and putamen. The expression is strongest in the medulla and weakest in the cerebral cortex.

Its subcellular location is the cytoplasm. The protein resides in the cytoskeleton. Probable regulator of cytoskeletal architecture that plays an important role in development. May regulate cellular and cytoskeletal architecture by modulating the spatial distribution of myosin II. The polypeptide is Protein Shroom4 (SHROOM4) (Homo sapiens (Human)).